Reading from the N-terminus, the 320-residue chain is Glutathione synthetase (320 aa).

Residues 130–315 (KIFISWFSRF…ITGILIDYIE (186 aa)) form the ATP-grasp domain. Residue 156–212 (WKEKNDIILKPLDAMGGKGVFRIKKDDPNFSVIVETLTNYEKKYCMIQTYLPEVQFG) coordinates ATP. Mg(2+) contacts are provided by glutamate 286 and asparagine 288.

It belongs to the prokaryotic GSH synthase family. Requires Mg(2+) as cofactor. Mn(2+) serves as cofactor.

It catalyses the reaction gamma-L-glutamyl-L-cysteine + glycine + ATP = glutathione + ADP + phosphate + H(+). It functions in the pathway sulfur metabolism; glutathione biosynthesis; glutathione from L-cysteine and L-glutamate: step 2/2. The protein is Glutathione synthetase of Buchnera aphidicola subsp. Schizaphis graminum (strain Sg).